We begin with the raw amino-acid sequence, 332 residues long: Beta-ketoacyl-[acyl-carrier-protein] synthase III (332 aa).

Catalysis depends on residues Cys116 and His257. The interval Gln258–Arg262 is ACP-binding. Asn287 is an active-site residue.

It belongs to the thiolase-like superfamily. FabH family. In terms of assembly, homodimer.

It is found in the cytoplasm. It carries out the reaction malonyl-[ACP] + acetyl-CoA + H(+) = 3-oxobutanoyl-[ACP] + CO2 + CoA. Its pathway is lipid metabolism; fatty acid biosynthesis. Functionally, catalyzes the condensation reaction of fatty acid synthesis by the addition to an acyl acceptor of two carbons from malonyl-ACP. Catalyzes the first condensation reaction which initiates fatty acid synthesis and may therefore play a role in governing the total rate of fatty acid production. Possesses both acetoacetyl-ACP synthase and acetyl transacylase activities. Its substrate specificity determines the biosynthesis of branched-chain and/or straight-chain of fatty acids. The sequence is that of Beta-ketoacyl-[acyl-carrier-protein] synthase III from Acaryochloris marina (strain MBIC 11017).